The following is a 234-amino-acid chain: tRNA1(Val) (adenine(37)-N6)-methyltransferase (234 aa).

Belongs to the methyltransferase superfamily. tRNA (adenine-N(6)-)-methyltransferase family.

It localises to the cytoplasm. It catalyses the reaction adenosine(37) in tRNA1(Val) + S-adenosyl-L-methionine = N(6)-methyladenosine(37) in tRNA1(Val) + S-adenosyl-L-homocysteine + H(+). In terms of biological role, specifically methylates the adenine in position 37 of tRNA(1)(Val) (anticodon cmo5UAC). This is tRNA1(Val) (adenine(37)-N6)-methyltransferase from Aliivibrio fischeri (strain ATCC 700601 / ES114) (Vibrio fischeri).